A 145-amino-acid chain; its full sequence is MIKTILLLLINFMLILIVNGDIWNYCDGNINPTFKINKLTLLPDPPLVGKEVTISLEGSLNEQITSGSSIFNVAFFINGGWRQLPTFHNDICKVLSCPVSAGPFTYSTSIKVPIFTPHGQYKGQLTLTDQSNRNVTCLTFQTYLK.

Positions 1 to 20 (MIKTILLLLINFMLILIVNG) are cleaved as a signal peptide. N134 carries an N-linked (GlcNAc...) asparagine glycan.

This sequence belongs to the NPC2 family. As to quaternary structure, monomer.

Functionally, catalyzes the intermembrane transfer of phosphatidylglycerol and phosphatidylinositol. This chain is Putative phosphatidylglycerol/phosphatidylinositol transfer protein DDB_G0282179, found in Dictyostelium discoideum (Social amoeba).